Reading from the N-terminus, the 376-residue chain is Cyclin-dependent kinase 9 (376 aa).

The Protein kinase domain maps to 19–319 (YERLAKIGQG…SDDALNHDFF (301 aa)). Residues 25-33 (IGQGTFGEV) and lysine 48 contribute to the ATP site. Residue aspartate 153 is the Proton acceptor of the active site. The disordered stretch occupies residues 345–376 (PPRRRGGHMPQQPANQARNPAATNQSEFDRVF). Residues 354–369 (PQQPANQARNPAATNQ) are compositionally biased toward low complexity.

Belongs to the protein kinase superfamily. CMGC Ser/Thr protein kinase family. CDC2/CDKX subfamily. As to quaternary structure, associates with cyclin-T to form P-TEFb.

It localises to the nucleus. It carries out the reaction L-seryl-[protein] + ATP = O-phospho-L-seryl-[protein] + ADP + H(+). The catalysed reaction is L-threonyl-[protein] + ATP = O-phospho-L-threonyl-[protein] + ADP + H(+). The enzyme catalyses [DNA-directed RNA polymerase] + ATP = phospho-[DNA-directed RNA polymerase] + ADP + H(+). Its function is as follows. Member of the cyclin-dependent kinase pair (CDK9/cyclin-T) complex, also called positive transcription elongation factor B (P-TEFb), which is proposed to facilitate the transition from abortive to production elongation by phosphorylating the CTD (C-terminal domain) of the large subunit of RNA polymerase II (RNAP II) and SUPT5H. The sequence is that of Cyclin-dependent kinase 9 (cdk9) from Xenopus tropicalis (Western clawed frog).